Consider the following 108-residue polypeptide: DNA-binding protein HBbu (108 aa).

This sequence belongs to the bacterial histone-like protein family.

In terms of biological role, histone-like DNA-binding protein which is capable of wrapping DNA to stabilize it, and thus to prevent its denaturation under extreme environmental conditions. This chain is DNA-binding protein HBbu (hbb), found in Borrelia parkeri.